The primary structure comprises 187 residues: uncharacterized protein (187 aa).

The disordered stretch occupies residues 131–187 (VAEKKDQRKKKPKVKTQGENAPVAKSAGENSGKLEEQKDERKGIAKDIDDFFGGIDG). The span at 162-179 (GKLEEQKDERKGIAKDID) shows a compositional bias: basic and acidic residues.

This is an uncharacterized protein from Haemophilus influenzae (Bacteriophage HP1).